The chain runs to 200 residues: MTIRYPNGKRYNQASQPHKTPIKKHTYSNRGMSLEEELNETNEYYLTHNIACVHKKPTPLQIVKVDYPARSAAVVKEAYFKQPSTTDYNGVYKGKYIDFEAKETKNKTSFPLQNFHLHQIEHMKQVIAHNGIAFVIIKFTLFDELYLLDAKHIIAFWNRQNTGGRKSITKEEIVEHGSLLSCGYHPRIDYIRVLDTVYFS.

The interval 1-25 (MTIRYPNGKRYNQASQPHKTPIKKH) is disordered. 4 residues coordinate Mg(2+): T85, D87, E100, and Q119.

The protein belongs to the RecU family. Mg(2+) serves as cofactor.

The protein localises to the cytoplasm. It carries out the reaction Endonucleolytic cleavage at a junction such as a reciprocal single-stranded crossover between two homologous DNA duplexes (Holliday junction).. Its function is as follows. Endonuclease that resolves Holliday junction intermediates in genetic recombination. Cleaves mobile four-strand junctions by introducing symmetrical nicks in paired strands. Promotes annealing of linear ssDNA with homologous dsDNA. Required for DNA repair, homologous recombination and chromosome segregation. The chain is Holliday junction resolvase RecU from Bacillus thuringiensis (strain Al Hakam).